Reading from the N-terminus, the 587-residue chain is Complement component C8 beta chain (587 aa).

The first 31 residues, 1–31, serve as a signal peptide directing secretion; it reads MNHKLKPTVGLGYCLLCAALCLLLLRDVAIA. Positions 32 to 44 are excised as a propeptide; it reads GSGEEPSGVREAR. A TSP type-1 1 domain is found at 56 to 111; that stretch reads DCVQSEWSSWTRCDVCRKKRYRYAKLVQPSQFGGEPCHVQGKEVEPCSPPSRYDCT. Cystine bridges form between Cys-57/Cys-92, Cys-68/Cys-102, Cys-71/Cys-110, Cys-118/Cys-129, and Cys-123/Cys-142. C-linked (Man) tryptophan glycosylation is found at Trp-62 and Trp-65. An LDL-receptor class A domain is found at 117-159; it reads LCEGFLCTYTGRCVPIDLRCNGDDDCGDWSAEKGSPKVPKACK. Leu-134, Asn-137, Asp-139, Asp-141, and Glu-148 together coordinate Ca(2+). Residues 154 to 500 enclose the MACPF domain; sequence VPKACKQEAQ…EYLEESSSCR (347 aa). A disulfide bridge connects residues Cys-158 and Cys-196. 4 consecutive transmembrane segments (beta stranded) span residues 248 to 255, 258 to 265, 375 to 382, and 388 to 395; these read TTVSIGFA, GVAEFGFN, EQIVLKVG, and VYVTVGLE. 5 cysteine pairs are disulfide-bonded: Cys-374–Cys-399, Cys-499–Cys-546, Cys-501–Cys-517, Cys-504–Cys-519, and Cys-521–Cys-530. The region spanning 501–531 is the EGF-like domain; that stretch reads CAPCRNNGLAVLKGTRCECVCPSGYSGLGCE. The 47-residue stretch at 541–587 folds into the TSP type-1 2 domain; it reads DGSWSCWGSWSPCRGRSKTRSRQCNNPAPSSGGIACRGLQMETTDCF. C-linked (Man) tryptophan glycosylation is found at Trp-547 and Trp-550. Cys-553 and Cys-586 form a disulfide bridge.

Belongs to the complement C6/C7/C8/C9 family. Heterotrimer of 3 chains: alpha (C8A), beta (C8B) and gamma (C8G); the alpha and gamma chains are disulfide bonded. Component of the membrane attack complex (MAC), composed of complement C5b, C6, C7, C8A, C8B, C8G and multiple copies of the pore-forming subunit C9.

It is found in the secreted. Its subcellular location is the target cell membrane. Component of the membrane attack complex (MAC), a multiprotein complex activated by the complement cascade, which inserts into a target cell membrane and forms a pore, leading to target cell membrane rupture and cell lysis. The MAC is initiated by proteolytic cleavage of C5 into complement C5b in response to the classical, alternative, lectin and GZMK complement pathways. The complement pathways consist in a cascade of proteins that leads to phagocytosis and breakdown of pathogens and signaling that strengthens the adaptive immune system. C8B, together with C8A and C8G, inserts into the target membrane, but does not form pores by itself. During MAC assembly, associates with C5b, C6 and C7 to form the C5b8 intermediate complex that inserts into the target membrane and traverses the bilayer increasing membrane rigidity. This Oncorhynchus mykiss (Rainbow trout) protein is Complement component C8 beta chain (c8b).